A 292-amino-acid polypeptide reads, in one-letter code: Hydroxysqualene synthase (292 aa).

This sequence belongs to the phytoene/squalene synthase family. HpnC subfamily.

It carries out the reaction presqualene diphosphate + H2O = hydroxysqualene + diphosphate. It functions in the pathway secondary metabolite biosynthesis; hopanoid biosynthesis. Its function is as follows. Involved in the biosynthesis of the hopanoid precursor squalene (SQ) from farnesyl diphosphate (FPP). Catalyzes the second step, the conversion of presqualene diphosphate (PSPP) to hydroxysqualene (HSQ). This Sinorhizobium fredii (strain NBRC 101917 / NGR234) protein is Hydroxysqualene synthase.